The primary structure comprises 223 residues: Interleukin-12 subunit alpha (223 aa).

Positions 1–23 (MCPSARSLLLLASLVLLEHLGSA) are cleaved as a signal peptide. N-linked (GlcNAc...) asparagine glycans are attached at residues N41, N79, N121, and N176. 2 disulfide bridges follow: C66/C200 and C87/C125.

The protein belongs to the IL-6 superfamily. In terms of assembly, heterodimer with IL12B; disulfide-linked. This heterodimer is known as interleukin IL-12. Heterodimer with EBI3/IL27B; not disulfide-linked. This heterodimer is known as interleukin IL-35. Interacts with NBR1; this interaction promotes IL-12 secretion.

It localises to the secreted. Its function is as follows. Heterodimerizes with IL12B to form the IL-12 cytokine or with EBI3/IL27B to form the IL-35 cytokine. IL-12 is primarily produced by professional antigen-presenting cells (APCs) such as B-cells and dendritic cells (DCs) as well as macrophages and granulocytes and regulates T-cell and natural killer-cell responses, induces the production of interferon-gamma (IFN-gamma), favors the differentiation of T-helper 1 (Th1) cells and is an important link between innate resistance and adaptive immunity. Mechanistically, exerts its biological effects through a receptor composed of IL12R1 and IL12R2 subunits. Binding to the receptor results in the rapid tyrosine phosphorylation of a number of cellular substrates including the JAK family kinases TYK2 and JAK2. In turn, recruited STAT4 gets phosphorylated and translocates to the nucleus where it regulates cytokine/growth factor responsive genes. As part of IL-35, plays essential roles in maintaining the immune homeostasis of the liver microenvironment and also functions as an immune-suppressive cytokine. Mediates biological events through unconventional receptors composed of IL12RB2 and gp130/IL6ST heterodimers or homodimers. Signaling requires the transcription factors STAT1 and STAT4, which form a unique heterodimer that binds to distinct DNA sites. This Marmota monax (Woodchuck) protein is Interleukin-12 subunit alpha (IL12A).